Reading from the N-terminus, the 350-residue chain is Dihydroorotase (350 aa).

Residues His17 and His19 each coordinate Zn(2+). Substrate-binding positions include 19–21 (HLR) and Asn45. Zn(2+) is bound by residues Lys103, His140, and His178. Lys103 is subject to N6-carboxylysine. Position 140 (His140) interacts with substrate. Residue Leu224 participates in substrate binding. Asp252 serves as a coordination point for Zn(2+). Asp252 is a catalytic residue. Substrate-binding residues include His256 and Ala268.

The protein belongs to the metallo-dependent hydrolases superfamily. DHOase family. Class II DHOase subfamily. As to quaternary structure, homodimer. Zn(2+) serves as cofactor.

The catalysed reaction is (S)-dihydroorotate + H2O = N-carbamoyl-L-aspartate + H(+). The protein operates within pyrimidine metabolism; UMP biosynthesis via de novo pathway; (S)-dihydroorotate from bicarbonate: step 3/3. In terms of biological role, catalyzes the reversible cyclization of carbamoyl aspartate to dihydroorotate. In Buchnera aphidicola subsp. Acyrthosiphon pisum (strain 5A), this protein is Dihydroorotase.